The following is a 115-amino-acid chain: NADH-ubiquinone oxidoreductase chain 3 (115 aa).

3 helical membrane passes run 3-23 (LVMA…IAFW), 55-75 (FFLV…LLPL), and 86-106 (TMLI…AYEW).

The protein belongs to the complex I subunit 3 family. As to quaternary structure, core subunit of respiratory chain NADH dehydrogenase (Complex I) which is composed of 45 different subunits. Interacts with TMEM186. Interacts with TMEM242.

It localises to the mitochondrion inner membrane. The catalysed reaction is a ubiquinone + NADH + 5 H(+)(in) = a ubiquinol + NAD(+) + 4 H(+)(out). Its function is as follows. Core subunit of the mitochondrial membrane respiratory chain NADH dehydrogenase (Complex I) which catalyzes electron transfer from NADH through the respiratory chain, using ubiquinone as an electron acceptor. Essential for the catalytic activity of complex I. The chain is NADH-ubiquinone oxidoreductase chain 3 from Hippopotamus amphibius (Hippopotamus).